The primary structure comprises 291 residues: Gamma-sarcoglycan (291 aa).

Residues 38 to 58 (LFVLLLLIVLLVNFALTIWIL) traverse the membrane as a helical; Signal-anchor for type II membrane protein segment. Topologically, residues 59 to 291 (RVMWFSPVGM…TCHEHSHLCL (233 aa)) are extracellular. An N-linked (GlcNAc...) asparagine glycan is attached at Asn110. 2 cysteine pairs are disulfide-bonded: Cys265–Cys290 and Cys267–Cys283.

The protein belongs to the sarcoglycan beta/delta/gamma/zeta family. Interacts with the syntrophin SNTA1. Cross-link to form 2 major subcomplexes: one consisting of SGCB, SGCD and SGCG and the other consisting of SGCB and SGCD. The association between SGCB and SGCG is particularly strong while SGCA is loosely associated with the other sarcoglycans. Interacts with FLNC. In terms of processing, disulfide bonds are present.

The protein resides in the cell membrane. The protein localises to the sarcolemma. Its subcellular location is the cytoplasm. It localises to the cytoskeleton. In terms of biological role, component of the sarcoglycan complex, a subcomplex of the dystrophin-glycoprotein complex which forms a link between the F-actin cytoskeleton and the extracellular matrix. The protein is Gamma-sarcoglycan (SGCG) of Bos taurus (Bovine).